Consider the following 773-residue polypeptide: Acyl-homoserine lactone acylase PvdQ (773 aa).

The N-terminal stretch at 1–23 (MSRALPGFLFAGLSVAVVLPAQA) is a signal peptide. Residues 200-221 (SQQVQALQLAAARNERFALERG) constitute a propeptide, spacer peptide. Catalysis depends on Ser222, which acts as the Nucleophile.

Belongs to the peptidase S45 family. As to quaternary structure, heterodimer of an alpha subunit and a beta subunit processed from the same precursor.

Its subcellular location is the periplasm. It carries out the reaction an N-acyl-L-homoserine lactone + H2O = L-homoserine lactone + a carboxylate. Its function is as follows. Catalyzes the deacylation of acyl-homoserine lactone (AHL or acyl-HSL), releasing homoserine lactone (HSL) and the corresponding fatty acid. Possesses a specificity for the degradation of long-chain acyl-HSLs (side chains of 11 to 14 carbons in length). This Pseudomonas syringae pv. tomato (strain ATCC BAA-871 / DC3000) protein is Acyl-homoserine lactone acylase PvdQ (pvdQ).